The primary structure comprises 644 residues: MNARVEQLEFQAEARQLLDLMVHSVYSNKDSFLRELISNASDALDKLRLEAFRNKDLDVDTSDLHIQIEVDKDARTLTIRDNGIGMTRAEVVDLIGTLAKSGTAELRQQLREAKNAQNEAASEELIGQFGIGFYSSFMVADKVELLTRKAGESEATKWESSGEGTYTIESVENAPQGTSVTLHLKPEDTEDELHDYTSEFKIKSLVKKYSDFIAWPIRMEVERRTPATEEGGEETVTREVETLNSMKALWARPKDEVSEEEYKEFYKHIAHAWDDPLEVIAMKAEGTFEYQALLFIPSHAPFDLFNRDAHTGIQLYVKRVFIMGDCDQLMPEYLRFVKGVVDAQDMSLNVSREILQQDRQIKAIRRRLTKKVLSTIKELQSERPDDYRTFWTQFGRVVKEGLLSDFDNQETLLQLCSFASTHSEEEATTLAQYVERMKEGQTQIFYATGETRQQILKSPHLEAFKAKGYEVLLLTDPVDEVWVGTVTEFDGKPLQSIAKGEVDLSAEGEESQAEREEQQKEFADLLAWLKDTLSDHVKEVRLSNRLTDSPACLITDAFGITPALARLYRASGQDIPVGKRILELNPKHPLVTGLRQAHQDRADDPSVAETAELLYGTALLAEGGALDDPARFAEILADRLARTL.

An a; substrate-binding region spans residues 1-352 (MNARVEQLEF…AQDMSLNVSR (352 aa)). Residues 353 to 566 (EILQQDRQIK…AFGITPALAR (214 aa)) are b. Positions 567–644 (LYRASGQDIP…ILADRLARTL (78 aa)) are c.

Belongs to the heat shock protein 90 family. As to quaternary structure, homodimer.

The protein resides in the cytoplasm. Its function is as follows. Molecular chaperone. Has ATPase activity. The chain is Chaperone protein HtpG from Mycobacterium avium (strain 104).